The chain runs to 362 residues: Carbamoyl phosphate synthase small chain (362 aa).

The segment at 1–169 (MGKRLLILED…TKTAYPAPGV (169 aa)) is CPSase. Residues S46, G220, and G222 each contribute to the L-glutamine site. In terms of domain architecture, Glutamine amidotransferase type-1 spans 172–358 (NIVLVDFGLK…LELIDAFQLE (187 aa)). C247 acts as the Nucleophile in catalysis. L-glutamine-binding residues include M248, Q251, N289, G291, and Y292. Active-site residues include H331 and D333.

Belongs to the CarA family. As to quaternary structure, composed of two chains; the small (or glutamine) chain promotes the hydrolysis of glutamine to ammonia, which is used by the large (or ammonia) chain to synthesize carbamoyl phosphate. Tetramer of heterodimers (alpha,beta)4.

It catalyses the reaction hydrogencarbonate + L-glutamine + 2 ATP + H2O = carbamoyl phosphate + L-glutamate + 2 ADP + phosphate + 2 H(+). It carries out the reaction L-glutamine + H2O = L-glutamate + NH4(+). It participates in amino-acid biosynthesis; L-arginine biosynthesis; carbamoyl phosphate from bicarbonate: step 1/1. The protein operates within pyrimidine metabolism; UMP biosynthesis via de novo pathway; (S)-dihydroorotate from bicarbonate: step 1/3. In terms of biological role, small subunit of the glutamine-dependent carbamoyl phosphate synthetase (CPSase). CPSase catalyzes the formation of carbamoyl phosphate from the ammonia moiety of glutamine, carbonate, and phosphate donated by ATP, constituting the first step of 2 biosynthetic pathways, one leading to arginine and/or urea and the other to pyrimidine nucleotides. The small subunit (glutamine amidotransferase) binds and cleaves glutamine to supply the large subunit with the substrate ammonia. The chain is Carbamoyl phosphate synthase small chain from Streptococcus mutans serotype c (strain ATCC 700610 / UA159).